The chain runs to 471 residues: ATP synthase subunit beta 1 (471 aa).

ATP is bound at residue 157–164 (GGAGVGKT).

Belongs to the ATPase alpha/beta chains family. In terms of assembly, F-type ATPases have 2 components, CF(1) - the catalytic core - and CF(0) - the membrane proton channel. CF(1) has five subunits: alpha(3), beta(3), gamma(1), delta(1), epsilon(1). CF(0) has three main subunits: a(1), b(2) and c(9-12). The alpha and beta chains form an alternating ring which encloses part of the gamma chain. CF(1) is attached to CF(0) by a central stalk formed by the gamma and epsilon chains, while a peripheral stalk is formed by the delta and b chains.

The protein localises to the cell inner membrane. It catalyses the reaction ATP + H2O + 4 H(+)(in) = ADP + phosphate + 5 H(+)(out). In terms of biological role, produces ATP from ADP in the presence of a proton gradient across the membrane. The catalytic sites are hosted primarily by the beta subunits. The polypeptide is ATP synthase subunit beta 1 (Pelobacter propionicus (strain DSM 2379 / NBRC 103807 / OttBd1)).